The primary structure comprises 101 residues: Small ribosomal subunit protein uS14 (101 aa).

Positions 1–10 (MAKKSAIEKN) are enriched in basic and acidic residues. Residues 1 to 23 (MAKKSAIEKNNRRKKMTKNAAPK) form a disordered region. Over residues 11-23 (NRRKKMTKNAAPK) the composition is skewed to basic residues.

Part of the 30S ribosomal subunit. Contacts proteins S3 and S10.

In terms of biological role, binds 16S rRNA, required for the assembly of 30S particles and may also be responsible for determining the conformation of the 16S rRNA at the A site. The sequence is that of Small ribosomal subunit protein uS14 from Rhodopseudomonas palustris (strain ATCC BAA-98 / CGA009).